The primary structure comprises 169 residues: Short form salivary protein D7R3 (169 aa).

The signal sequence occupies residues 1–21 (MFGKLLPCAILVWCLFSLGQA). Cystine bridges form between C30–C62, C43–C168, and C101–C120. Residues E31 and R46 each coordinate noradrenaline. E31 serves as a coordination point for serotonin. Positions 59, 118, 135, and 138 each coordinate serotonin. Residues Y118, D135, and E138 each contribute to the histamine site. Noradrenaline is bound by residues D135 and E138.

It belongs to the PBP/GOBP family. As to expression, female saliva (at protein level). Female salivary gland. Low-level expression in female carcass without salivary glands. Not detected in male tissues.

The protein resides in the secreted. Modulates blood feeding of female mosquitoes on vertebrate species by binding and sequestering different mediators involved in the host response. Binds serotonin, noradrenaline, histamine and adrenaline. Inhibits histamine-, serotonin- and noradrenaline-induced smooth muscle contraction. Exhibits vasodilating activity. The chain is Short form salivary protein D7R3 from Anopheles gambiae (African malaria mosquito).